A 149-amino-acid chain; its full sequence is Large ribosomal subunit protein uL11 (149 aa).

It belongs to the universal ribosomal protein uL11 family. As to quaternary structure, part of the ribosomal stalk of the 50S ribosomal subunit. Interacts with L10 and the large rRNA to form the base of the stalk. L10 forms an elongated spine to which L12 dimers bind in a sequential fashion forming a multimeric L10(L12)X complex. One or more lysine residues are methylated.

Functionally, forms part of the ribosomal stalk which helps the ribosome interact with GTP-bound translation factors. The polypeptide is Large ribosomal subunit protein uL11 (Methylobacterium nodulans (strain LMG 21967 / CNCM I-2342 / ORS 2060)).